The following is a 1064-amino-acid chain: Lethal(2) giant larvae protein homolog 1 (1064 aa).

WD repeat units follow at residues 38–71 (SALA…FTGL), 78–119 (VTQM…ALSF), 139–176 (VTVV…GQTL), 200–234 (SLQG…DHIF), 240–272 (LESL…GSFP), 290–332 (AINK…ETLV), 340–374 (IIDF…VLDL), 396–474 (TCSA…YKLS), 518–593 (QKVA…RVLV), 602–663 (TAVT…LRQS), 723–783 (VRCL…KEVQ), 792–844 (AIAV…VSAK), 849–902 (LTAH…VHYS), and 916–939 (VFTR…SLSA). Phosphoserine is present on Ser-663. A Phosphothreonine modification is found at Thr-958. Residues 966 to 1010 (ESPKLSQANGTPSILLAPQSLDGSPDPAHSMGPDTPEPPEAALSP) form a disordered region. Phosphoserine occurs at positions 967 and 985.

It belongs to the WD repeat L(2)GL family. As to quaternary structure, associated with nonmuscle myosin II heavy chain. Interacts with PRKCI/aPKC, PARD6B/Par-6 and PARD6A. Interacts with STX4A. Interacts with RAB10 (GDP-bound form); the interaction is direct and promotes RAB10 association with membranes and activation through competition with the Rab inhibitor GDI1. Interacts with DCAF1. In terms of processing, phosphorylated at least at Ser-663 by PRKCI. In terms of tissue distribution, expressed in brain, kidney, and muscle but is barely seen in heart and placenta. Down-regulated or lost in all cell lines and in most of the tumor samples analyzed. Loss was associated with advanced stage of the disease.

It is found in the early endosome membrane. It localises to the golgi apparatus. The protein localises to the trans-Golgi network membrane. Its subcellular location is the golgi apparatus membrane. The protein resides in the cell projection. It is found in the axon. It localises to the cytoplasm. The protein localises to the cytoskeleton. Cortical cytoskeleton protein found in a complex involved in maintaining cell polarity and epithelial integrity. Involved in the regulation of mitotic spindle orientation, proliferation, differentiation and tissue organization of neuroepithelial cells. Involved in axonogenesis through RAB10 activation thereby regulating vesicular membrane trafficking toward the axonal plasma membrane. This Homo sapiens (Human) protein is Lethal(2) giant larvae protein homolog 1 (LLGL1).